Consider the following 28-residue polypeptide: Ranatuerin-2BYb (28 aa).

Residues Cys23 and Cys28 are joined by a disulfide bond.

Expressed by the skin glands.

It localises to the secreted. In terms of biological role, antibacterial activity against Gram-negative bacterium E.coli. Very weak hemolysis activity. The sequence is that of Ranatuerin-2BYb from Rana boylii (Foothill yellow-legged frog).